A 966-amino-acid chain; its full sequence is Glycine dehydrogenase (decarboxylating) (966 aa).

An N6-(pyridoxal phosphate)lysine modification is found at Lys-713.

The protein belongs to the GcvP family. In terms of assembly, the glycine cleavage system is composed of four proteins: P, T, L and H. Requires pyridoxal 5'-phosphate as cofactor.

It carries out the reaction N(6)-[(R)-lipoyl]-L-lysyl-[glycine-cleavage complex H protein] + glycine + H(+) = N(6)-[(R)-S(8)-aminomethyldihydrolipoyl]-L-lysyl-[glycine-cleavage complex H protein] + CO2. Functionally, the glycine cleavage system catalyzes the degradation of glycine. The P protein binds the alpha-amino group of glycine through its pyridoxal phosphate cofactor; CO(2) is released and the remaining methylamine moiety is then transferred to the lipoamide cofactor of the H protein. The polypeptide is Glycine dehydrogenase (decarboxylating) (Shewanella halifaxensis (strain HAW-EB4)).